We begin with the raw amino-acid sequence, 317 residues long: Heme-binding protein HMX1 (317 aa).

Over 1–289 the chain is Cytoplasmic; it reads MEDSSNTIIP…FNKDSATRRA (289 aa). Residues 290–310 traverse the membrane as a helical; Anchor for type IV membrane protein segment; the sequence is LHTVMLLVLSIIAIWVLYFLV.

Heme serves as cofactor.

It is found in the endoplasmic reticulum membrane. Its function is as follows. Plays an important role in the degradation of heme under conditions of iron deprivation. This is Heme-binding protein HMX1 (HMX1) from Saccharomyces cerevisiae (strain ATCC 204508 / S288c) (Baker's yeast).